The primary structure comprises 47 residues: uncharacterized protein (47 aa).

A helical membrane pass occupies residues 28–45 (VMIWGCLPYFLYVLIRMF).

Its subcellular location is the cell membrane. This is an uncharacterized protein from Bacillus subtilis (strain 168).